Consider the following 189-residue polypeptide: Elongation factor P 2 (189 aa).

This sequence belongs to the elongation factor P family.

The protein resides in the cytoplasm. It participates in protein biosynthesis; polypeptide chain elongation. Involved in peptide bond synthesis. Stimulates efficient translation and peptide-bond synthesis on native or reconstituted 70S ribosomes in vitro. Probably functions indirectly by altering the affinity of the ribosome for aminoacyl-tRNA, thus increasing their reactivity as acceptors for peptidyl transferase. In Lactobacillus johnsonii (strain CNCM I-12250 / La1 / NCC 533), this protein is Elongation factor P 2 (efp2).